We begin with the raw amino-acid sequence, 195 residues long: Interferon tau-1 (195 aa).

The signal sequence occupies residues 1–23; sequence MAFVLSLLMALVLVSYGPGRSLG. Intrachain disulfides connect Cys24/Cys122 and Cys52/Cys162. Asn101 is a glycosylation site (N-linked (GlcNAc...) asparagine).

It belongs to the alpha/beta interferon family. IFN-alphaII subfamily. Constitutively and exclusively expressed in the mononuclear cells of the extraembryonic trophectoderm.

It is found in the secreted. Its function is as follows. Paracrine hormone primarily responsible for maternal recognition of pregnancy. Interacts with endometrial receptors, probably type I interferon receptors, and blocks estrogen receptor expression, preventing the estrogen-induced increase in oxytocin receptor expression in the endometrium. This results in the suppression of the pulsatile endometrial release of the luteolytic hormone prostaglandin F2-alpha, hindering the regression of the corpus luteum (luteolysis) and therefore a return to ovarian cyclicity. This, and a possible direct effect of IFN-tau on prostaglandin synthesis, leads in turn to continued ovarian progesterone secretion, which stimulates the secretion by the endometrium of the nutrients required for the growth of the conceptus. In summary, displays particularly high antiviral and antiproliferative potency concurrently with particular weak cytotoxicity, high antiluteolytic activity and immunomodulatory properties. In contrast with other IFNs, IFN-tau is not virally inducible. This Bos taurus (Bovine) protein is Interferon tau-1 (IFNT1).